We begin with the raw amino-acid sequence, 361 residues long: UDP-N-acetylglucosamine--N-acetylmuramyl-(pentapeptide) pyrophosphoryl-undecaprenol N-acetylglucosamine transferase (361 aa).

Residues 12–14, Asn124, Arg163, Ser189, Ile241, 260–265, and Gln286 contribute to the UDP-N-acetyl-alpha-D-glucosamine site; these read TGG and ALTVSE.

The protein belongs to the glycosyltransferase 28 family. MurG subfamily.

The protein localises to the cell inner membrane. The catalysed reaction is di-trans,octa-cis-undecaprenyl diphospho-N-acetyl-alpha-D-muramoyl-L-alanyl-D-glutamyl-meso-2,6-diaminopimeloyl-D-alanyl-D-alanine + UDP-N-acetyl-alpha-D-glucosamine = di-trans,octa-cis-undecaprenyl diphospho-[N-acetyl-alpha-D-glucosaminyl-(1-&gt;4)]-N-acetyl-alpha-D-muramoyl-L-alanyl-D-glutamyl-meso-2,6-diaminopimeloyl-D-alanyl-D-alanine + UDP + H(+). The protein operates within cell wall biogenesis; peptidoglycan biosynthesis. Functionally, cell wall formation. Catalyzes the transfer of a GlcNAc subunit on undecaprenyl-pyrophosphoryl-MurNAc-pentapeptide (lipid intermediate I) to form undecaprenyl-pyrophosphoryl-MurNAc-(pentapeptide)GlcNAc (lipid intermediate II). The sequence is that of UDP-N-acetylglucosamine--N-acetylmuramyl-(pentapeptide) pyrophosphoryl-undecaprenol N-acetylglucosamine transferase from Aeromonas hydrophila subsp. hydrophila (strain ATCC 7966 / DSM 30187 / BCRC 13018 / CCUG 14551 / JCM 1027 / KCTC 2358 / NCIMB 9240 / NCTC 8049).